Here is a 1038-residue protein sequence, read N- to C-terminus: Eukaryotic translation initiation factor 3 subunit A (1038 aa).

Residues 92–121 (LKKFIELAEKKVTEAQAKADEIQSSLESAA) are a coiled coil. Residues 339-523 (MTKAVSFVLL…GVLTFDTDVF (185 aa)) enclose the PCI domain. Residues 611–899 (IDKKKEAATD…QKQREEEAEA (289 aa)) adopt a coiled-coil conformation. Composition is skewed to basic and acidic residues over residues 621–632 (ALQRKQREEETR) and 800–901 (RHEE…EARR). Disordered regions lie at residues 621–641 (ALQR…QQLQ) and 800–1038 (RHEE…QQGQ). 2 stretches are compositionally biased toward low complexity: residues 943–952 (KEAAGGAAPE) and 976–993 (GASA…AAPS). Residues 1002 to 1019 (DSGSSTPPSRTQTPATTS) show a composition bias toward polar residues.

It belongs to the eIF-3 subunit A family. In terms of assembly, component of the eukaryotic translation initiation factor 3 (eIF-3) complex.

It is found in the cytoplasm. RNA-binding component of the eukaryotic translation initiation factor 3 (eIF-3) complex, which is involved in protein synthesis of a specialized repertoire of mRNAs and, together with other initiation factors, stimulates binding of mRNA and methionyl-tRNAi to the 40S ribosome. The eIF-3 complex specifically targets and initiates translation of a subset of mRNAs involved in cell proliferation. The protein is Eukaryotic translation initiation factor 3 subunit A (tif32) of Aspergillus oryzae (strain ATCC 42149 / RIB 40) (Yellow koji mold).